The chain runs to 933 residues: Progesterone receptor (933 aa).

The tract at residues 1-164 (MTELKAKGPR…PATQRVLSPL (164 aa)) is AF3; mediates transcriptional activation. Residues 1–256 (MTELKAKGPR…AAAGGGAAAV (256 aa)) form a disordered region. Positions 1 to 566 (MTELKAKGPR…YSFESLPQKI (566 aa)) are modulating, Pro-Rich. At S20 the chain carries Phosphoserine. 2 consecutive short sequence motifs (LXXL motif) follow at residues 55–59 (LDGLL) and 115–119 (LDTLL). S130 and S162 each carry phosphoserine. Positions 165-305 (MSRSGGKAGD…LATTTMDFIH (141 aa)) are mediates transcriptional transrepression. Residues 183–187 (KVLPR) carry the Nuclear localization signal motif. S190 and S213 each carry phosphoserine. Over residues 220-231 (EVEEEDGSESED) the composition is skewed to acidic residues. The residue at position 294 (S294) is a Phosphoserine; by MAPK1. The segment at 332-380 (GAGAASAFAPPRSSPSASSTPVAVGDFPDCAYPPDADPKDDAYPLYGDF) is disordered. Positions 335–350 (AASAFAPPRSSPSASS) are enriched in low complexity. Residue S345 is modified to Phosphoserine; by MAPK. K388 participates in a covalent cross-link: Glycyl lysine isopeptide (Lys-Gly) (interchain with G-Cter in SUMO); alternate. Residue K388 forms a Glycyl lysine isopeptide (Lys-Gly) (interchain with G-Cter in ubiquitin); alternate linkage. S400 is modified (phosphoserine; by CDK2). The segment at 415-454 (PDFPLGPPPPLPPRAPPSRPGEAAVTAAPASASVSSSSSS) is disordered. Residues 418-433 (PLGPPPPLPPRAPPSR) show a composition bias toward pro residues. Over residues 434–454 (PGEAAVTAAPASASVSSSSSS) the composition is skewed to low complexity. Residues 456 to 546 (STLECILYKA…VYPPYLNYLR (91 aa)) are AF1; mediates transcriptional activation. A Glycyl lysine isopeptide (Lys-Gly) (interchain with G-Cter in SUMO) cross-link involves residue K531. 2 NR C4-type zinc fingers span residues 567–587 (CLIC…CGSC) and 603–627 (CAGR…LRKC). Positions 567–639 (CLICGDEASG…AGMVLGGRKF (73 aa)) form a DNA-binding region, nuclear receptor. S676 carries the phosphoserine modification. Residues 679-913 (QDIQFFPPLI…EFPEMMSEVI (235 aa)) form the NR LBD domain. The segment at 687 to 933 (LINLLVSIEP…MVKPLLFHKK (247 aa)) is AF2; mediates transcriptional activation. Progesterone is bound at residue R766.

It belongs to the nuclear hormone receptor family. Interacts with SMARD1 and UNC45A. Interacts with CUEDC2; the interaction promotes ubiquitination, decreases sumoylation, and represses transcriptional activity. Interacts with PIAS3; the interaction promotes sumoylation of PR in a hormone-dependent manner, inhibits DNA-binding, and alters nuclear export. Interacts with SP1; the interaction requires ligand-induced phosphorylation on Ser-345 by ERK1/2-MAPK. Interacts with PRMT2. Interacts with NCOA2 and NCOA1. Interacts with KLF9. Interacts with GTF2B. In terms of processing, phosphorylated on multiple serine sites. Several of these sites are hormone-dependent. Phosphorylation on Ser-294 is highly hormone-dependent and modulates ubiquitination and sumoylation on Lys-388. Phosphorylation on Ser-345 also requires induction by hormone. Basal phosphorylation on Ser-162, Ser-190 and Ser-400 is increased in response to progesterone and can be phosphorylated in vitro by the CDK2-A1 complex. Increased levels of phosphorylation on Ser-400 also in the presence of EGF, heregulin, IGF, PMA and FBS. Phosphorylation at this site by CDK2 is ligand-independent, and increases nuclear translocation and transcriptional activity. Phosphorylation at Ser-162 and Ser-294, but not at Ser-190, is impaired during the G(2)/M phase of the cell cycle. Phosphorylation on Ser-345 by ERK1/2 MAPK is required for interaction with SP1. Sumoylation is hormone-dependent and represses transcriptional activity. Sumoylation on all three sites is enhanced by PIAS3. Desumoylated by SENP1. Sumoylation on Lys-388, the main site of sumoylation, is repressed by ubiquitination on the same site, and modulated by phosphorylation at Ser-294. Post-translationally, ubiquitination is hormone-dependent and represses sumoylation on the same site. Promoted by MAPK-mediated phosphorylation on Ser-294. Ubiquitinated by UBR5, leading to its degradation: UBR5 specifically recognizes and binds ligand-bound PGR when it is not associated with coactivators (NCOAs). In presence of NCOAs, the UBR5-degron is not accessible, preventing its ubiquitination and degradation. In terms of processing, palmitoylated by ZDHHC7 and ZDHHC21. Palmitoylation is required for plasma membrane targeting and for rapid intracellular signaling via ERK and AKT kinases and cAMP generation.

It is found in the nucleus. The protein localises to the cytoplasm. Its function is as follows. The steroid hormones and their receptors are involved in the regulation of eukaryotic gene expression and affect cellular proliferation and differentiation in target tissues. Transcriptional activator of several progesteron-dependent promoters in a variety of cell types. Involved in activation of SRC-dependent MAPK signaling on hormone stimulation. This is Progesterone receptor (PGR) from Chlorocebus aethiops (Green monkey).